We begin with the raw amino-acid sequence, 902 residues long: Ephrin type-B receptor 1-B (902 aa).

The 119-residue stretch at 1 to 119 (HRVYVEMRFT…FFKKCPSVVQ (119 aa)) folds into the Eph LBD domain. The Extracellular segment spans residues 1–459 (HRVYVEMRFT…KSELREQLPL (459 aa)). Fibronectin type-III domains are found at residues 240–350 (VPSG…TNQA) and 351–448 (APSS…TEED). N252, N344, and N398 each carry an N-linked (GlcNAc...) asparagine glycan. Residues 460-480 (IAGSAAAGVVFIVSLVAISIV) form a helical membrane-spanning segment. The Cytoplasmic segment spans residues 481–902 (CSRKRTYSKE…QISQSPTSIA (422 aa)). Residues 537–800 (VKIEEVIGAG…EIVNTLDKMI (264 aa)) form the Protein kinase domain. ATP is bound by residues 543–551 (IGAGEFGEV) and K569. Residue D662 is the Proton acceptor of the active site. The SAM domain maps to 829 to 893 (SAFTSVDDWL…LNSIQSMRVQ (65 aa)). A PDZ-binding motif is present at residues 900-902 (SIA).

The protein belongs to the protein kinase superfamily. Tyr protein kinase family. Ephrin receptor subfamily. Heterotetramer upon binding of the ligand. The heterotetramer is composed of an ephrin dimer and a receptor dimer. Oligomerization is probably required to induce biological responses. In terms of processing, phosphorylated. Autophosphorylation is stimulated by ligands. Expressed in the embryo in the brain and spinal cord and in the first and fourth visceral arches. Most abundant in adult brain, with lower levels in eye, heart, ovary, oviduct, lung and pharynx.

Its subcellular location is the cell membrane. It is found in the early endosome membrane. The protein localises to the cell projection. The protein resides in the dendrite. The enzyme catalyses L-tyrosyl-[protein] + ATP = O-phospho-L-tyrosyl-[protein] + ADP + H(+). Receptor tyrosine kinase which binds promiscuously transmembrane ephrin-B family ligands residing on adjacent cells, leading to contact-dependent bidirectional signaling into neighboring cells. The signaling pathway downstream of the receptor is referred to as forward signaling while the signaling pathway downstream of the ephrin ligand is referred to as reverse signaling. May play a role in axon guidance during nervous system development. May also play an important redundant role with other ephrin-B receptors in development and maturation of dendritic spines and synapse formation. More generally, may play a role in targeted cell migration and adhesion. Upon activation by ephrin-B ligands activates the MAPK/ERK and the JNK signaling cascades to regulate cell migration and adhesion respectively. The polypeptide is Ephrin type-B receptor 1-B (ephb1-b) (Xenopus laevis (African clawed frog)).